Consider the following 81-residue polypeptide: Small cysteine-rich protein 4 (81 aa).

Residues 1 to 23 (MDTKVACLLLIILGALTVQGAVS) form the signal peptide. The propeptide occupies 24 to 25 (GN).

It belongs to the Cnidaria small cysteine-rich protein (SCRiP) family. beta subfamily. In terms of processing, contains 4 disulfide bonds.

It localises to the secreted. The protein localises to the nematocyst. Its function is as follows. Induces neurotoxic symptoms on zebrafish. Has also been claimed to be implied in calcification, but tests on homolog proteins suggest that proteins of this family have a neurotoxic function and not a calcification function. This is Small cysteine-rich protein 4 from Orbicella faveolata (Mountainous star coral).